We begin with the raw amino-acid sequence, 310 residues long: ADP-L-glycero-D-manno-heptose-6-epimerase (310 aa).

Residues 10–11 (FI), 31–32 (DN), Lys38, Lys53, 75–79 (EGACS), and Asn92 each bind NADP(+). Tyr140 serves as the catalytic Proton acceptor. Lys144 serves as a coordination point for NADP(+). Asn169 lines the substrate pocket. Val170 and Lys178 together coordinate NADP(+). The active-site Proton acceptor is Lys178. Residues Ser180, His187, 201 to 204 (FEGS), Arg209, and Tyr272 each bind substrate.

The protein belongs to the NAD(P)-dependent epimerase/dehydratase family. HldD subfamily. Homopentamer. NADP(+) is required as a cofactor.

The catalysed reaction is ADP-D-glycero-beta-D-manno-heptose = ADP-L-glycero-beta-D-manno-heptose. Its pathway is nucleotide-sugar biosynthesis; ADP-L-glycero-beta-D-manno-heptose biosynthesis; ADP-L-glycero-beta-D-manno-heptose from D-glycero-beta-D-manno-heptose 7-phosphate: step 4/4. Its function is as follows. Catalyzes the interconversion between ADP-D-glycero-beta-D-manno-heptose and ADP-L-glycero-beta-D-manno-heptose via an epimerization at carbon 6 of the heptose. This chain is ADP-L-glycero-D-manno-heptose-6-epimerase, found in Cronobacter sakazakii (strain ATCC BAA-894) (Enterobacter sakazakii).